The primary structure comprises 1798 residues: MSEEIYSPEMKAYFESLQREIDRAYAIARKARAQGKDPSFDVEVPQATDMAGRVESLVGPPGVAERIRELVKEYGKEIAALKVVDEIIEGKFGDLGSKEKYAEQAVRTALAILTEGIVSAPLEGIADVKIKRNEWADGSEYLALYYAGPIRSSGGTAQALSVLVGDYVRRKLGLDRFKPSDEHIERMVEEVDLYHRAVTRLQYHPEADEVRLAMRNIPIEITGEETDKVEVSHRNVPGVETNHLRGGAILVLAEGVLQKAKKLVKYIDKMGIEGWDWIKEFVEAKEKGKSSEENKDESKAEDTGTESVAEKKENVEKGFYYELYEKFRANIAPNKKYTKEIIGGRPLFAEPSTNGGFRLRYGRSRVSGFATWSVNPATMLILDEFIAIGTQMKTERPGKGCIVTPATTVEGPIVRLKNGSVVRVDDYETALKVRNEVDEILYVGDALVNFGDFVENNQTLLPANYVEEWWVQELVQAIKDLYEVELQPFAENDREAVEEAAEYLEVDPDFLWNLLKDPLRVKPDVETAIHLSTVLDIPFHPYYTLYWNTLQPEEVEELQKALLGAQIEWAEFRKNRFAKKVVLENDKNIKRYLELLGLPHRLERVEKKRKVIVVEYPWSAALLTPLGNLEWEFKAKPFYTVIDIINENNRIKLRDRGISWIGARMGRPEKAKERKMKPPVQVLFPIGLAGGQSRDIKKAAEEGKTARVEIAFFKCPKCGHVGPEHLCPVCGTRKELLWHCPKCGADYPESDAKDFNYRCPKCDVELKPYAEREIKPADLLRQAMDNVKVYGIDRLKGVKGMTSGYKMAEPLEKGLLRVKNDVYVFKDGTIRFDATDAPITHFKPKEIGTSVEKLRELGYTHDFEGKPLERDDQILELKVQDVILPYEAGRYLLKVARFIDDLLEKFYGLPRFYNAEKMEDLVGHLVIGLAPHTSAGIIGRIIGFSDVLVGYAHPYYHAAKRRNCFPGDTRILVQINGLPQRITLRELYDLFEDERYENMAYVRKKPKADVKVYSFDPESGKVVLTDIEDVIKAPSTDHLIRFELELGRSFETTVDHPVLVYENGKFVEKRAFEVREGDRILVPNLKLPEKNIDYLDLLKEFSREEFAHLHDRIMVRGIAEWLRSVEADVKEDYLRRDSIPLSVLLRVLTEKEISIEEVPSCWLGFKRDKVRIKRFVPLKPLLRVVGYYLAEGYARESKSVYQLSFSMAEKEVREDLKRALREAFGDGFGIYERGGKVTVGSRILYLLFTEVLKAGKNAYSKRVPSLVFTLPREAVAEMLKAYFEGDGSALKSVPRVVAYSVNKALLEDIETLLLAKFGIRGYYTFDNNANRGNARGRLYHVERGTEAPVSKVYALNIAGEHYHRFFNSIGFVSERKNSIYELHAEKSPAQDRYSSQNGWLVKVRRIEYITPKDDFVFSLNAKKYHNVIINESIVTHQCDGDEDAVMLLLDALLNFSKYYLPEKRGGKMDAPLVVTTRLDPREVDSEVHNMDVVRYYPLEFYKATYELKSPKEVKVIERVEDRLGKPEMYEGIKFTHDTDDIGLGPKMSLYKQLGDMEEKVARQLALAERIRAVDEHHVAETIINSHLVPDLRGNLRSFTRQEFRCVKCNTKYRRPPLTGKCPKCGGKIVLTVSKGAIEKYLPTAKMLVTKYRVKDYTRQRICITEKDIKTLFENVFPEKQRTLMGFSADICEKMVKERTGHSNGKNGYLDEFNGKNGKASKKSGSLASKLSGKGKEPSKKKESAKPKRSEKVKNLTSFEAAAKNEQARGTAGNAKKAESEKPKRKKRKGISLDEFFGS.

Residues 286–309 (EKGKSSEENKDESKAEDTGTESVA) are disordered. The DOD-type homing endonuclease domain maps to 1184-1319 (VVGYYLAEGY…ETLLLAKFGI (136 aa)). The disordered stretch occupies residues 1699 to 1798 (TGHSNGKNGY…GISLDEFFGS (100 aa)). Residues 1714-1731 (GKNGKASKKSGSLASKLS) are compositionally biased toward low complexity. The span at 1733–1753 (KGKEPSKKKESAKPKRSEKVK) shows a compositional bias: basic and acidic residues.

It belongs to the archaeal DNA polymerase II family. Heterodimer of a large subunit and a small subunit. In terms of processing, this protein undergoes a protein self splicing that involves a post-translational excision of the intervening region (intein) followed by peptide ligation.

The enzyme catalyses DNA(n) + a 2'-deoxyribonucleoside 5'-triphosphate = DNA(n+1) + diphosphate. It carries out the reaction Exonucleolytic cleavage in the 3'- to 5'-direction to yield nucleoside 5'-phosphates.. In terms of biological role, possesses two activities: a DNA synthesis (polymerase) and an exonucleolytic activity that degrades single-stranded DNA in the 3'- to 5'-direction. Has a template-primer preference which is characteristic of a replicative DNA polymerase. This chain is DNA polymerase II large subunit (polC), found in Thermococcus kodakarensis (strain ATCC BAA-918 / JCM 12380 / KOD1) (Pyrococcus kodakaraensis (strain KOD1)).